The following is a 246-amino-acid chain: Isoprenyl transferase (246 aa).

The active site involves D18. D18 contributes to the Mg(2+) binding site. Substrate contacts are provided by residues 19 to 22 (GNGR), W23, R31, H35, and 63 to 65 (SAE). The Proton acceptor role is filled by N66. Substrate contacts are provided by residues W67, R69, R186, and 192–194 (RIS). E205 provides a ligand contact to Mg(2+).

The protein belongs to the UPP synthase family. In terms of assembly, homodimer. Requires Mg(2+) as cofactor.

Functionally, catalyzes the condensation of isopentenyl diphosphate (IPP) with allylic pyrophosphates generating different type of terpenoids. The chain is Isoprenyl transferase from Geobacter sulfurreducens (strain ATCC 51573 / DSM 12127 / PCA).